The chain runs to 1590 residues: Pentafunctional AROM polypeptide (1590 aa).

Positions 1–387 (MGSTTFENPT…YEPKASVVED (387 aa)) are 3-dehydroquinate synthase. NAD(+)-binding positions include 49-51 (DTN), 86-89 (ENSK), 117-119 (GGV), and D122. Position 133 (R133) interacts with 7-phospho-2-dehydro-3-deoxy-D-arabino-heptonate. Residue 142-143 (TT) participates in NAD(+) binding. 7-phospho-2-dehydro-3-deoxy-D-arabino-heptonate is bound by residues D149 and K155. K164 is an NAD(+) binding site. Position 165 (N165) interacts with 7-phospho-2-dehydro-3-deoxy-D-arabino-heptonate. NAD(+) is bound by residues 182 to 185 (FLET) and N193. E197 is a binding site for Zn(2+). 7-phospho-2-dehydro-3-deoxy-D-arabino-heptonate-binding positions include 197-200 (EVVK) and K253. Residue E263 is the Proton acceptor; for 3-dehydroquinate synthase activity of the active site. 7-phospho-2-dehydro-3-deoxy-D-arabino-heptonate is bound by residues 267 to 271 (RNILN) and H274. Position 274 (H274) interacts with Zn(2+). H278 serves as the catalytic Proton acceptor; for 3-dehydroquinate synthase activity. H290 and K359 together coordinate 7-phospho-2-dehydro-3-deoxy-D-arabino-heptonate. H290 serves as a coordination point for Zn(2+). Positions 400–841 (VRPSVPETLN…WDILSKSFQV (442 aa)) are EPSP synthase. C823 functions as the For EPSP synthase activity in the catalytic mechanism. The interval 863 to 1055 (DKSIFIIGMR…RNKPQSFFVS (193 aa)) is shikimate kinase. An ATP-binding site is contributed by 870–877 (GMRGAGKT). The segment at 1056–1276 (LTMPDISGAA…AAPGQLSAAE (221 aa)) is 3-dehydroquinase. The active-site Proton acceptor; for 3-dehydroquinate dehydratase activity is the H1179. Catalysis depends on K1207, which acts as the Schiff-base intermediate with substrate; for 3-dehydroquinate dehydratase activity. Residues 1289–1590 (PKSFYLFGTP…KMDKHPTFVC (302 aa)) form a shikimate dehydrogenase region.

This sequence in the N-terminal section; belongs to the sugar phosphate cyclases superfamily. Dehydroquinate synthase family. It in the 2nd section; belongs to the EPSP synthase family. In the 3rd section; belongs to the shikimate kinase family. The protein in the 4th section; belongs to the type-I 3-dehydroquinase family. This sequence in the C-terminal section; belongs to the shikimate dehydrogenase family. Homodimer. It depends on Zn(2+) as a cofactor.

The protein localises to the cytoplasm. It catalyses the reaction 7-phospho-2-dehydro-3-deoxy-D-arabino-heptonate = 3-dehydroquinate + phosphate. The enzyme catalyses 3-dehydroquinate = 3-dehydroshikimate + H2O. The catalysed reaction is shikimate + NADP(+) = 3-dehydroshikimate + NADPH + H(+). It carries out the reaction shikimate + ATP = 3-phosphoshikimate + ADP + H(+). It catalyses the reaction 3-phosphoshikimate + phosphoenolpyruvate = 5-O-(1-carboxyvinyl)-3-phosphoshikimate + phosphate. The protein operates within metabolic intermediate biosynthesis; chorismate biosynthesis; chorismate from D-erythrose 4-phosphate and phosphoenolpyruvate: step 2/7. It functions in the pathway metabolic intermediate biosynthesis; chorismate biosynthesis; chorismate from D-erythrose 4-phosphate and phosphoenolpyruvate: step 3/7. It participates in metabolic intermediate biosynthesis; chorismate biosynthesis; chorismate from D-erythrose 4-phosphate and phosphoenolpyruvate: step 4/7. Its pathway is metabolic intermediate biosynthesis; chorismate biosynthesis; chorismate from D-erythrose 4-phosphate and phosphoenolpyruvate: step 5/7. The protein operates within metabolic intermediate biosynthesis; chorismate biosynthesis; chorismate from D-erythrose 4-phosphate and phosphoenolpyruvate: step 6/7. The AROM polypeptide catalyzes 5 consecutive enzymatic reactions in prechorismate polyaromatic amino acid biosynthesis. This is Pentafunctional AROM polypeptide from Sclerotinia sclerotiorum (White mold).